The primary structure comprises 374 residues: Putative glutamate--cysteine ligase 2-1 (374 aa).

It belongs to the glutamate--cysteine ligase type 2 family. YbdK subfamily.

It catalyses the reaction L-cysteine + L-glutamate + ATP = gamma-L-glutamyl-L-cysteine + ADP + phosphate + H(+). Its function is as follows. ATP-dependent carboxylate-amine ligase which exhibits weak glutamate--cysteine ligase activity. The protein is Putative glutamate--cysteine ligase 2-1 of Saccharopolyspora erythraea (strain ATCC 11635 / DSM 40517 / JCM 4748 / NBRC 13426 / NCIMB 8594 / NRRL 2338).